Consider the following 466-residue polypeptide: Probable Xaa-Pro aminopeptidase pepP (466 aa).

Positions 264, 275, 398, and 438 each coordinate Mn(2+).

The protein belongs to the peptidase M24B family. Mn(2+) serves as cofactor.

The catalysed reaction is Release of any N-terminal amino acid, including proline, that is linked to proline, even from a dipeptide or tripeptide.. Its function is as follows. Catalyzes the removal of a penultimate prolyl residue from the N-termini of peptides. The chain is Probable Xaa-Pro aminopeptidase pepP (pepP) from Aspergillus terreus (strain NIH 2624 / FGSC A1156).